Consider the following 536-residue polypeptide: Bicoumarin synthase desC (536 aa).

The helical transmembrane segment at 12–32 (YVALAGITGFFLVFLGFLVVI) threads the bilayer. 2 N-linked (GlcNAc...) asparagine glycosylation sites follow: N149 and N371. A heme-binding site is contributed by C480.

The protein belongs to the cytochrome P450 family. The cofactor is heme.

It is found in the membrane. The catalysed reaction is 2 7-demethylsiderin + NADPH + O2 = desertorin A + NADP(+) + 2 H2O. Its pathway is secondary metabolite biosynthesis. Its function is as follows. Non-reducing polyketide synthase; part of the gene cluster that mediates the biosynthesis of the bicoumarin desertorin. The non-reducing polyketide synthase desS first catalyzes the formation of the pentaketidic 4,7-dihydroxy-5-methylcoumarin from acetyl coenzyme A and 4 malonyl coenzyme A molecules. Further O-methylation by desB leads to the formation of 7-demethylsiderin. Then, an oxidative phenol coupling catalyzed by the cytochrome P450 monooxygenase desC forms the 6,8'-dimer M-desertorin A via dimerization the monomeric precursor, 7-demethylsiderin. M-desertorin A is further converted to M-desertorin C. The polypeptide is Bicoumarin synthase desC (Aspergillus desertorum (Emericella desertorum)).